Here is a 307-residue protein sequence, read N- to C-terminus: Putative ankyrin repeat protein R229 (307 aa).

6 ANK repeats span residues 135 to 164, 165 to 194, 196 to 224, 226 to 254, 256 to 284, and 286 to 307; these read ASRVILGNRLNLRDISTFKYLMSLGVDINV, DNDKPLRWAASRGYYGLVKFLLDNGANVHA, DDEAVQLASRNGYLNVVKILVEYGANVNA, NDYAIQMACKYGYNEIVRFLVFNGANPMA, RYYPIEIATEFGNKLIVRFLLHQDKSMVY, and SYAMDIAVRNENWDLLNVLLLD.

In Acanthamoeba polyphaga (Amoeba), this protein is Putative ankyrin repeat protein R229.